The sequence spans 300 residues: tRNA-cytidine(32) 2-sulfurtransferase (300 aa).

Positions 41 to 46 (SGGKDS) match the PP-loop motif motif. Residues Cys-116, Cys-119, and Cys-207 each coordinate [4Fe-4S] cluster.

This sequence belongs to the TtcA family. Homodimer. Mg(2+) is required as a cofactor. Requires [4Fe-4S] cluster as cofactor.

It is found in the cytoplasm. It catalyses the reaction cytidine(32) in tRNA + S-sulfanyl-L-cysteinyl-[cysteine desulfurase] + AH2 + ATP = 2-thiocytidine(32) in tRNA + L-cysteinyl-[cysteine desulfurase] + A + AMP + diphosphate + H(+). It participates in tRNA modification. Its function is as follows. Catalyzes the ATP-dependent 2-thiolation of cytidine in position 32 of tRNA, to form 2-thiocytidine (s(2)C32). The sulfur atoms are provided by the cysteine/cysteine desulfurase (IscS) system. In Idiomarina loihiensis (strain ATCC BAA-735 / DSM 15497 / L2-TR), this protein is tRNA-cytidine(32) 2-sulfurtransferase.